The sequence spans 816 residues: Two pore channel protein 1 (816 aa).

Over 1–112 (MAVSLDDDVP…AHNHLFYLME (112 aa)) the chain is Cytoplasmic. The disordered stretch occupies residues 17-64 (EGGSAPLAPSNGLGQEELPSKNGGSYAIHDSQAPSLSSGGESSPSSPA). The segment covering 50–63 (PSLSSGGESSPSSP) has biased composition (low complexity). The helical transmembrane segment at 113 to 133 (LATALLLLLLSLCEAPAVPAL) threads the bilayer. Residue R134 is a topological domain, extracellular. The chain crosses the membrane as a helical span at residues 135–155 (LGIYVHATLELFALMVVVFEL). Residues 156 to 177 (CMKLRWLGLHTFIRHKRTMVKT) lie on the Cytoplasmic side of the membrane. Residues 178–198 (SVLVVQFVEAIVVLVRQMSHV) form a helical membrane-spanning segment. Residues 199–200 (RV) lie on the Extracellular side of the membrane. A helical membrane pass occupies residues 201-220 (TRALRCIFLVDCRYCGGVRR). The Cytoplasmic segment spans residues 221 to 234 (NLRQIFQSLPPFMD). A helical transmembrane segment spans residues 235–255 (ILLLLLFFMIIFAILGFYLFS). Topologically, residues 256–262 (PNPSDPY) are extracellular. Residues 263-286 (FSTLENSIVSLFVLLTTANFPDVM) constitute an intramembrane region (helical; Pore-forming). Residues 287 to 294 (MPSYSRNP) lie on the Extracellular side of the membrane. The helical transmembrane segment at 295-315 (WSCVFFIVYLSIELYFIMNLL) threads the bilayer. Over 316–444 (LAVVFDTFND…NILVKSKAFQ (129 aa)) the chain is Cytoplasmic. A helical transmembrane segment spans residues 445–465 (YFMYLVVAVNGVWILVETFML). The Extracellular portion of the chain corresponds to 466–479 (KGGNFFSKHVPWSY). A helical transmembrane segment spans residues 480–500 (LVFLTIYGVELFLKVAGLGPV). Over 501 to 503 (EYL) the chain is Cytoplasmic. A helical membrane pass occupies residues 504–526 (SSGWNLFDFSVTVFAFLGLLALA). Residues 527-534 (LNMEPFYF) lie on the Extracellular side of the membrane. A helical transmembrane segment spans residues 535–549 (IVVLRPLQLLRLFKL). The Cytoplasmic segment spans residues 550-573 (KERYRNVLDTMFELLPRMASLGLT). A helical membrane pass occupies residues 574–594 (LLIFYYSFAIVGMEFFCGIVF). The Extracellular portion of the chain corresponds to 595 to 629 (PNCCNTSTVADAYRWRNHTVGNRTVVEEGYYYLNN). N-linked (GlcNAc...) asparagine glycans are attached at residues N599, N611, and N616. Positions 630–653 (FDNILNSFVTLFELTVVNNWYIIM) form an intramembrane region, helical; Pore-forming. Topologically, residues 654–670 (EGVTSQTSHWSRLYFMT) are extracellular. Residues 671–691 (FYIVTMVVMTIIVAFILEAFV) traverse the membrane as a helical segment. Topologically, residues 692-816 (FRMNYSRKNQ…GSRQRSQTVT (125 aa)) are cytoplasmic. The stretch at 769–796 (SLKMYQEEIQEWYEEHAREQEQQRQLSS) forms a coiled coil. Residues 782–816 (EEHAREQEQQRQLSSSAAPAAQQPPGSRQRSQTVT) are disordered. The span at 791-816 (QRQLSSSAAPAAQQPPGSRQRSQTVT) shows a compositional bias: low complexity.

It belongs to the calcium channel alpha-1 subunit (TC 1.A.1.11) family. Two pore calcium channel subfamily. Dimer. Interacts with MTOR; the interaction is required for TPCN1 ATP sensitivity. Interacts with STX7, STX8 and STX12. Interacts with JPT2. Found in a complex with LSM12, TPCN1 and TPCN2. N-glycosylated. Highest expression found in the heart and kidney, and lowest expression found in the spleen.

The protein resides in the lysosome membrane. It is found in the endosome membrane. It localises to the early endosome membrane. Its subcellular location is the recycling endosome membrane. It carries out the reaction Na(+)(in) = Na(+)(out). It catalyses the reaction Ca(2+)(in) = Ca(2+)(out). Its activity is regulated as follows. Na(+) current is inhibited by ATP in a MTORC-dependent manner. ATP sensitivity is independent of PI(3,5)P2. Probably regulated by Mg(2+) ions, cytosolic Mg(2+) selectively inhibits outward current while lysosomal Mg(2+) modestly inhibits both the outward and inward currents. In the absence of Mg(2+), NAADP readily activates TPCN2, with properties similar to PI(3,5)P2. Both current elicited by PI(3,5)P2 as well as NAADP are inhibited by tetrandrine. In terms of biological role, intracellular channel initially characterized as a non-selective Ca(2+)-permeable channel activated by NAADP (nicotinic acid adenine dinucleotide phosphate), it is also a voltage-gated highly-selective Na(+) channel activated directly by PI(3,5)P2 (phosphatidylinositol 3,5-bisphosphate) that senses pH changes and confers electrical excitability to organelles. Localizes to the early and recycling endosomes membranes where it plays a role in the uptake and processing of proteins and regulates organellar membrane excitability, membrane trafficking and pH homeostasis. Ion selectivity is not fixed but rather agonist-dependent and under defined ionic conditions, can be readily activated by both NAADP and PI(3,5)P2. Required for mTOR-dependent nutrient sensing. Functionally, (Microbial infection) During Ebola virus (EBOV) infection, controls the movement of endosomes containing virus particles and is required by EBOV to escape from the endosomal network into the cell cytoplasm. The protein is Two pore channel protein 1 of Homo sapiens (Human).